The primary structure comprises 194 residues: uncharacterized protein (194 aa).

The N-terminal stretch at 1 to 29 (MKKAFLVFLSVVLVTTVFLVKQQESVAQA) is a signal peptide. Residues 104 to 131 (KVDELLKKAGQIVEEKVEAAKEIAASKD) are a coiled coil. Residues 149–171 (YFYYVSYVAAAGALILIILAIDI) traverse the membrane as a helical segment.

The protein resides in the membrane. This is an uncharacterized protein from Bacillus subtilis (strain 168).